A 347-amino-acid polypeptide reads, in one-letter code: tRNA(Ile)-lysidine synthase (347 aa).

27–32 contacts ATP; sequence SGGADS. A disordered region spans residues 243–263; the sequence is AAPASPSHVEGEASAPHDAAH.

This sequence belongs to the tRNA(Ile)-lysidine synthase family.

It is found in the cytoplasm. It catalyses the reaction cytidine(34) in tRNA(Ile2) + L-lysine + ATP = lysidine(34) in tRNA(Ile2) + AMP + diphosphate + H(+). Functionally, ligates lysine onto the cytidine present at position 34 of the AUA codon-specific tRNA(Ile) that contains the anticodon CAU, in an ATP-dependent manner. Cytidine is converted to lysidine, thus changing the amino acid specificity of the tRNA from methionine to isoleucine. This is tRNA(Ile)-lysidine synthase from Nitratidesulfovibrio vulgaris (strain ATCC 29579 / DSM 644 / CCUG 34227 / NCIMB 8303 / VKM B-1760 / Hildenborough) (Desulfovibrio vulgaris).